We begin with the raw amino-acid sequence, 194 residues long: ATP synthase subunit delta (194 aa).

The protein belongs to the ATPase delta chain family. As to quaternary structure, F-type ATPases have 2 components, F(1) - the catalytic core - and F(0) - the membrane proton channel. F(1) has five subunits: alpha(3), beta(3), gamma(1), delta(1), epsilon(1). F(0) has three main subunits: a(1), b(2) and c(10-14). The alpha and beta chains form an alternating ring which encloses part of the gamma chain. F(1) is attached to F(0) by a central stalk formed by the gamma and epsilon chains, while a peripheral stalk is formed by the delta and b chains.

The protein resides in the cell inner membrane. Functionally, f(1)F(0) ATP synthase produces ATP from ADP in the presence of a proton or sodium gradient. F-type ATPases consist of two structural domains, F(1) containing the extramembraneous catalytic core and F(0) containing the membrane proton channel, linked together by a central stalk and a peripheral stalk. During catalysis, ATP synthesis in the catalytic domain of F(1) is coupled via a rotary mechanism of the central stalk subunits to proton translocation. In terms of biological role, this protein is part of the stalk that links CF(0) to CF(1). It either transmits conformational changes from CF(0) to CF(1) or is implicated in proton conduction. The chain is ATP synthase subunit delta from Bartonella quintana (strain Toulouse) (Rochalimaea quintana).